We begin with the raw amino-acid sequence, 145 residues long: MRALVQRVTSASVRVDGDEVGRITPPAGGHGLLVLVGVTHTDDEAKAALLARKVWTMRILENEQSAADLDAPVLVASQFTLMADTRRGRRPSWSAAAPRPVAEPLVDEFTGALRELGATVETGVFGEHMEISLVNDGPVTLLIDV.

The short motif at 137-138 (GP) is the Gly-cisPro motif, important for rejection of L-amino acids element.

Belongs to the DTD family. As to quaternary structure, homodimer.

It localises to the cytoplasm. It catalyses the reaction glycyl-tRNA(Ala) + H2O = tRNA(Ala) + glycine + H(+). The catalysed reaction is a D-aminoacyl-tRNA + H2O = a tRNA + a D-alpha-amino acid + H(+). Its function is as follows. An aminoacyl-tRNA editing enzyme that deacylates mischarged D-aminoacyl-tRNAs. Also deacylates mischarged glycyl-tRNA(Ala), protecting cells against glycine mischarging by AlaRS. Acts via tRNA-based rather than protein-based catalysis; rejects L-amino acids rather than detecting D-amino acids in the active site. By recycling D-aminoacyl-tRNA to D-amino acids and free tRNA molecules, this enzyme counteracts the toxicity associated with the formation of D-aminoacyl-tRNA entities in vivo and helps enforce protein L-homochirality. The protein is D-aminoacyl-tRNA deacylase of Rhodococcus opacus (strain B4).